The following is a 597-amino-acid chain: Elongation factor 4 (597 aa).

One can recognise a tr-type G domain in the interval 2 to 184; sequence KNIRNFSIIA…EIVAKIPAPT (183 aa). GTP-binding positions include 14–19 and 131–134; these read DHGKST and NKID.

The protein belongs to the TRAFAC class translation factor GTPase superfamily. Classic translation factor GTPase family. LepA subfamily.

The protein resides in the cell inner membrane. The enzyme catalyses GTP + H2O = GDP + phosphate + H(+). Its function is as follows. Required for accurate and efficient protein synthesis under certain stress conditions. May act as a fidelity factor of the translation reaction, by catalyzing a one-codon backward translocation of tRNAs on improperly translocated ribosomes. Back-translocation proceeds from a post-translocation (POST) complex to a pre-translocation (PRE) complex, thus giving elongation factor G a second chance to translocate the tRNAs correctly. Binds to ribosomes in a GTP-dependent manner. This is Elongation factor 4 from Neisseria meningitidis serogroup C (strain 053442).